Consider the following 287-residue polypeptide: Elongation factor Ts (287 aa).

The involved in Mg(2+) ion dislocation from EF-Tu stretch occupies residues 80–83 (TDFL).

This sequence belongs to the EF-Ts family.

The protein localises to the cytoplasm. In terms of biological role, associates with the EF-Tu.GDP complex and induces the exchange of GDP to GTP. It remains bound to the aminoacyl-tRNA.EF-Tu.GTP complex up to the GTP hydrolysis stage on the ribosome. This Pseudomonas putida (strain W619) protein is Elongation factor Ts.